A 532-amino-acid chain; its full sequence is P granule abnormality protein 2 (532 aa).

As to quaternary structure, interacts with pgl-1 and pgl-3; association with either pgl-1 or pgl-3 is not required for P-granule localization. In terms of tissue distribution, highly expressed in the germline.

It localises to the cytoplasmic granule. Functionally, transient component of P-granule which is involved in germline development. In Caenorhabditis elegans, this protein is P granule abnormality protein 2.